A 366-amino-acid chain; its full sequence is Ribosomal RNA large subunit methyltransferase M (366 aa).

Residues Ser-188, 221-224 (CPGG), Asp-240, Asp-260, and Asp-277 contribute to the S-adenosyl-L-methionine site. Lys-306 functions as the Proton acceptor in the catalytic mechanism.

This sequence belongs to the class I-like SAM-binding methyltransferase superfamily. RNA methyltransferase RlmE family. RlmM subfamily. In terms of assembly, monomer.

It localises to the cytoplasm. It carries out the reaction cytidine(2498) in 23S rRNA + S-adenosyl-L-methionine = 2'-O-methylcytidine(2498) in 23S rRNA + S-adenosyl-L-homocysteine + H(+). Catalyzes the 2'-O-methylation at nucleotide C2498 in 23S rRNA. In Photorhabdus laumondii subsp. laumondii (strain DSM 15139 / CIP 105565 / TT01) (Photorhabdus luminescens subsp. laumondii), this protein is Ribosomal RNA large subunit methyltransferase M.